Here is a 336-residue protein sequence, read N- to C-terminus: Ribosomal RNA small subunit methyltransferase C (336 aa).

The protein belongs to the methyltransferase superfamily. RsmC family. In terms of assembly, monomer.

It localises to the cytoplasm. It carries out the reaction guanosine(1207) in 16S rRNA + S-adenosyl-L-methionine = N(2)-methylguanosine(1207) in 16S rRNA + S-adenosyl-L-homocysteine + H(+). Functionally, specifically methylates the guanine in position 1207 of 16S rRNA in the 30S particle. The chain is Ribosomal RNA small subunit methyltransferase C from Buchnera aphidicola subsp. Schizaphis graminum (strain Sg).